The following is a 263-amino-acid chain: Small ribosomal subunit protein eS4 (263 aa).

An S4 RNA-binding domain is found at 42–104 (LPLVIFLRNR…TNELFRLIYD (63 aa)).

It belongs to the eukaryotic ribosomal protein eS4 family.

The polypeptide is Small ribosomal subunit protein eS4 (RpS4) (Bombyx mori (Silk moth)).